Reading from the N-terminus, the 513-residue chain is ATP synthase subunit alpha (513 aa).

169 to 176 (GDRQTGKT) provides a ligand contact to ATP.

This sequence belongs to the ATPase alpha/beta chains family. F-type ATPases have 2 components, CF(1) - the catalytic core - and CF(0) - the membrane proton channel. CF(1) has five subunits: alpha(3), beta(3), gamma(1), delta(1), epsilon(1). CF(0) has three main subunits: a(1), b(2) and c(9-12). The alpha and beta chains form an alternating ring which encloses part of the gamma chain. CF(1) is attached to CF(0) by a central stalk formed by the gamma and epsilon chains, while a peripheral stalk is formed by the delta and b chains.

The protein resides in the cell inner membrane. It catalyses the reaction ATP + H2O + 4 H(+)(in) = ADP + phosphate + 5 H(+)(out). Functionally, produces ATP from ADP in the presence of a proton gradient across the membrane. The alpha chain is a regulatory subunit. This chain is ATP synthase subunit alpha, found in Shewanella denitrificans (strain OS217 / ATCC BAA-1090 / DSM 15013).